Consider the following 345-residue polypeptide: 3-dehydroquinate synthase (345 aa).

It belongs to the archaeal-type DHQ synthase family.

The enzyme catalyses 2-amino-2,3,7-trideoxy-D-lyxo-hept-6-ulosonate + NAD(+) + H2O = 3-dehydroquinate + NH4(+) + NADH + H(+). Catalyzes the oxidative deamination and cyclization of 2-amino-3,7-dideoxy-D-threo-hept-6-ulosonic acid (ADH) to yield 3-dehydroquinate (DHQ), which is fed into the canonical shikimic pathway of aromatic amino acid biosynthesis. The protein is 3-dehydroquinate synthase of Methanocorpusculum labreanum (strain ATCC 43576 / DSM 4855 / Z).